We begin with the raw amino-acid sequence, 1036 residues long: Integrin alpha-9 (1036 aa).

Positions 1–28 are cleaved as a signal peptide; the sequence is MGGPAAARTGAGGLRALLLALVAAGVPA. The Extracellular segment spans residues 29-981; sequence GAYNLDAQRP…NLEPRGYVVG (953 aa). FG-GAP repeat units lie at residues 36–97, 109–175, 183–233, 234–290, 291–350, 352–409, and 412–475; these read QRPV…PDRR, RGAP…AKGK, EYKK…NTYF, KLND…SGTL, IKIF…GALE, QLTL…GIVP, and SMKL…LPGS. Cystine bridges form between C88–C98, C143–C163, and C180–C195. A glycan (N-linked (GlcNAc...) asparagine) is linked at N226. Ca(2+)-binding residues include D313, N315, D317, D321, D374, D376, D378, D382, D436, D438, N440, and D444. Cysteines 483 and 492 form a disulfide. N-linked (GlcNAc...) asparagine glycans are attached at residues N494 and N515. 3 cysteine pairs are disulfide-bonded: C498–C556, C621–C626, and C697–C707. N808 carries an N-linked (GlcNAc...) asparagine glycan. Disulfide bonds link C856/C892 and C899/C904. Residues 982–1002 form a helical membrane-spanning segment; sequence WIIAISLLVGILIFLLLAVLL. Over 1003–1036 the chain is Cytoplasmic; it reads WKMGFFRRRYKEIIEAEKNRKENEDGWDWVQKNQ. The GFFKR motif motif lies at 1006–1010; it reads GFFRR.

This sequence belongs to the integrin alpha chain family. In terms of assembly, heterodimer of an alpha and a beta subunit. Alpha-9 (ITGA9) associates with beta-1 (ITGB1). Integrin ITGA9:ITGB1 interacts with FBLN5 (via N-terminus). Integrin ITGA9:ITGB1 interacts with SPP1/OPN (via N-terminus). Integrin ITGA9:ITGB1 interacts with TNC/TNFN3 (via the 3rd Fibronectin type-III domain). Integrin ITGA9:ITGB1 interacts with SVEP1/polydom (via Sushi domain 21); thereby inhibits Ca(2+) intracellular signaling and as a result represses vasocontraction. In terms of tissue distribution, expressed in the media layer of the arterial wall (at protein level). Expressed in the airway epithelium, skeletal muscle, basal keratincytes, the basal epithelium of the cornea, hepatocytes, giant cells in the spleen and smooth muscle of the stomach, duodenum and veins (at protein level).

Its subcellular location is the membrane. Functionally, integrin alpha-9/beta-1 (ITGA9:ITGB1) is a receptor for VCAM1, cytotactin and osteopontin. It recognizes the sequence A-E-I-D-G-I-E-L in cytotactin. ITGA9:ITGB1 may play a crucial role in SVEP1/polydom-mediated myoblast cell adhesion. Integrin ITGA9:ITGB1 represses PRKCA-mediated L-type voltage-gated channel Ca(2+) influx and ROCK-mediated calcium sensitivity in vascular smooth muscle cells via its interaction with SVEP1, thereby inhibiting vasocontraction. This is Integrin alpha-9 from Mus musculus (Mouse).